A 423-amino-acid polypeptide reads, in one-letter code: Putative serpin-Z12 (423 aa).

Residues 1-25 (MAALAAGEPFSGRATGGDGGVRSDV) form a disordered region. The RCL stretch occupies residues 370-394 (GTVAAASTAVVMMQKGSSLPPVDFV).

It belongs to the serpin family.

Its function is as follows. Probable serine protease inhibitor. The chain is Putative serpin-Z12 from Oryza sativa subsp. japonica (Rice).